Here is an 84-residue protein sequence, read N- to C-terminus: Small ribosomal subunit protein bS20 (84 aa).

The segment at 1–28 is disordered; the sequence is MPNIKSAIKRVKTAETRNSRNASQRSAM.

This sequence belongs to the bacterial ribosomal protein bS20 family.

Its function is as follows. Binds directly to 16S ribosomal RNA. The polypeptide is Small ribosomal subunit protein bS20 (Listeria monocytogenes serotype 4b (strain CLIP80459)).